A 399-amino-acid polypeptide reads, in one-letter code: Nicotinate phosphoribosyltransferase (399 aa).

Phosphohistidine; by autocatalysis is present on His-217.

Belongs to the NAPRTase family. In terms of processing, transiently phosphorylated on a His residue during the reaction cycle. Phosphorylation strongly increases the affinity for substrates and increases the rate of nicotinate D-ribonucleotide production. Dephosphorylation regenerates the low-affinity form of the enzyme, leading to product release.

The catalysed reaction is nicotinate + 5-phospho-alpha-D-ribose 1-diphosphate + ATP + H2O = nicotinate beta-D-ribonucleotide + ADP + phosphate + diphosphate. Its pathway is cofactor biosynthesis; NAD(+) biosynthesis; nicotinate D-ribonucleotide from nicotinate: step 1/1. Catalyzes the synthesis of beta-nicotinate D-ribonucleotide from nicotinate and 5-phospho-D-ribose 1-phosphate at the expense of ATP. The polypeptide is Nicotinate phosphoribosyltransferase (Burkholderia mallei (strain ATCC 23344)).